We begin with the raw amino-acid sequence, 540 residues long: Gamma-cadinene synthase (540 aa).

Residues Asp-292, Asp-296, Asp-436, Ser-440, and Glu-444 each coordinate Mg(2+). A DDXXD motif motif is present at residues Asp-292–Asp-296.

Belongs to the terpene synthase family. Mg(2+) is required as a cofactor. Requires Mn(2+) as cofactor.

It catalyses the reaction (2E,6E)-farnesyl diphosphate = (+)-gamma-cadinene + diphosphate. The protein operates within secondary metabolite biosynthesis; terpenoid biosynthesis. Sesquiterpene synthase that catalyzes the cyclization of trans,trans-farnesyl diphosphate (FPP) to gamma cadinene. The chain is Gamma-cadinene synthase (CDS) from Ocimum basilicum (Sweet basil).